We begin with the raw amino-acid sequence, 236 residues long: MPRLPNSEDPPERPDFITNIINGLERYNPEAVGTLEQYLTTQCEERFCDCNANRTLLKLYQLNPDRIKDEVITNILVKAMTLFPSPQFSQALHLLSPSALSQQSELSEAVSKLRALNNQLEGAQYARFWATIESDDLYADLTTDIQGFEEMVRLRIAVLVSQAFREVQLSLMEQWLGLDEAPLKTFITEACGFKIEGDIVQIPKNPDNEAKKAEIREDVNVEMFSRVIRRAWEEVA.

Residues 48–218 (CDCNANRTLL…EAKKAEIRED (171 aa)) enclose the PCI domain.

Belongs to the eIF-3 subunit K family.

It localises to the cytoplasm. Component of the eukaryotic translation initiation factor 3 (eIF-3) complex, which is involved in protein synthesis of a specialized repertoire of mRNAs and, together with other initiation factors, stimulates binding of mRNA and methionyl-tRNAi to the 40S ribosome. The eIF-3 complex specifically targets and initiates translation of a subset of mRNAs involved in cell proliferation. This is Eukaryotic translation initiation factor 3 subunit K from Pyricularia oryzae (strain Y34) (Rice blast fungus).